The primary structure comprises 159 residues: Phosphopantetheine adenylyltransferase (159 aa).

A substrate-binding site is contributed by Ser9. Residues 9 to 10 (SF) and His17 each bind ATP. Lys41, Leu73, and Lys87 together coordinate substrate. ATP-binding positions include 88-90 (GLR), Glu98, and 123-129 (YGYLSSS).

Belongs to the bacterial CoaD family. As to quaternary structure, homohexamer. Mg(2+) serves as cofactor.

It is found in the cytoplasm. The catalysed reaction is (R)-4'-phosphopantetheine + ATP + H(+) = 3'-dephospho-CoA + diphosphate. It functions in the pathway cofactor biosynthesis; coenzyme A biosynthesis; CoA from (R)-pantothenate: step 4/5. In terms of biological role, reversibly transfers an adenylyl group from ATP to 4'-phosphopantetheine, yielding dephospho-CoA (dPCoA) and pyrophosphate. The chain is Phosphopantetheine adenylyltransferase from Thermoanaerobacter pseudethanolicus (strain ATCC 33223 / 39E) (Clostridium thermohydrosulfuricum).